A 484-amino-acid chain; its full sequence is Ribosomal protein uS12 methylthiotransferase RimO (484 aa).

In terms of domain architecture, MTTase N-terminal spans 8 to 119 (RRVAMVTLGC…LAERLDDVLA (112 aa)). The [4Fe-4S] cluster site is built by Cys17, Cys53, Cys82, Cys184, Cys188, and Cys191. The Radical SAM core domain maps to 170–401 (LDDSPLAALK…ALADELVAQR (232 aa)). Positions 403 to 469 (EDRVGTEVRV…GVDLVVRPVG (67 aa)) constitute a TRAM domain.

Belongs to the methylthiotransferase family. RimO subfamily. [4Fe-4S] cluster is required as a cofactor.

It is found in the cytoplasm. The catalysed reaction is L-aspartate(89)-[ribosomal protein uS12]-hydrogen + (sulfur carrier)-SH + AH2 + 2 S-adenosyl-L-methionine = 3-methylsulfanyl-L-aspartate(89)-[ribosomal protein uS12]-hydrogen + (sulfur carrier)-H + 5'-deoxyadenosine + L-methionine + A + S-adenosyl-L-homocysteine + 2 H(+). Catalyzes the methylthiolation of an aspartic acid residue of ribosomal protein uS12. The polypeptide is Ribosomal protein uS12 methylthiotransferase RimO (Saccharopolyspora erythraea (strain ATCC 11635 / DSM 40517 / JCM 4748 / NBRC 13426 / NCIMB 8594 / NRRL 2338)).